The primary structure comprises 525 residues: Bifunctional purine biosynthesis protein PurH (525 aa).

Residues 1–149 (MSDPVIKRAL…KNNESVTVVT (149 aa)) enclose the MGS-like domain.

Belongs to the PurH family.

It catalyses the reaction (6R)-10-formyltetrahydrofolate + 5-amino-1-(5-phospho-beta-D-ribosyl)imidazole-4-carboxamide = 5-formamido-1-(5-phospho-D-ribosyl)imidazole-4-carboxamide + (6S)-5,6,7,8-tetrahydrofolate. It carries out the reaction IMP + H2O = 5-formamido-1-(5-phospho-D-ribosyl)imidazole-4-carboxamide. Its pathway is purine metabolism; IMP biosynthesis via de novo pathway; 5-formamido-1-(5-phospho-D-ribosyl)imidazole-4-carboxamide from 5-amino-1-(5-phospho-D-ribosyl)imidazole-4-carboxamide (10-formyl THF route): step 1/1. It participates in purine metabolism; IMP biosynthesis via de novo pathway; IMP from 5-formamido-1-(5-phospho-D-ribosyl)imidazole-4-carboxamide: step 1/1. The protein is Bifunctional purine biosynthesis protein PurH of Prosthecochloris aestuarii (strain DSM 271 / SK 413).